Reading from the N-terminus, the 274-residue chain is Diaminopimelate epimerase (274 aa).

Asparagine 11, glutamine 44, and asparagine 64 together coordinate substrate. Cysteine 73 (proton donor) is an active-site residue. Substrate contacts are provided by residues 74 to 75 (GN), asparagine 157, asparagine 190, and 208 to 209 (ER). Cysteine 217 acts as the Proton acceptor in catalysis. 218 to 219 (GS) serves as a coordination point for substrate.

This sequence belongs to the diaminopimelate epimerase family. In terms of assembly, homodimer.

Its subcellular location is the cytoplasm. It catalyses the reaction (2S,6S)-2,6-diaminopimelate = meso-2,6-diaminopimelate. It participates in amino-acid biosynthesis; L-lysine biosynthesis via DAP pathway; DL-2,6-diaminopimelate from LL-2,6-diaminopimelate: step 1/1. Functionally, catalyzes the stereoinversion of LL-2,6-diaminopimelate (L,L-DAP) to meso-diaminopimelate (meso-DAP), a precursor of L-lysine and an essential component of the bacterial peptidoglycan. The polypeptide is Diaminopimelate epimerase (Enterobacter sp. (strain 638)).